Here is a 445-residue protein sequence, read N- to C-terminus: Transcription activator AFTR-1 (445 aa).

A DNA-binding region (zn(2)-C6 fungal-type) is located at residues 17–44 (CDFCTQSKLRCNKNKPSCRRCTLQQQPC). The tract at residues 50 to 89 (RRTGRPPKHPRKANDCQEANGQHGDQDPVTSTPGGSYQQQ) is disordered. Positions 51–60 (RTGRPPKHPR) are enriched in basic residues. Residues 77 to 89 (PVTSTPGGSYQQQ) are compositionally biased toward polar residues.

The protein resides in the nucleus. Its function is as follows. Transcription factor that regulates the expression of the gene clusters that mediate the biosynthesis of the host-selective toxins (HSTs) AF-toxins responsible for Alternaria black spot of strawberry disease by the strawberry pathotype. On cellular level, AF-toxins affect plasma membrane of susceptible cells and cause a sudden increase in loss of K(+) after a few minutes of toxin treatment. The protein is Transcription activator AFTR-1 of Alternaria alternata (Alternaria rot fungus).